The chain runs to 1435 residues: MAQCVQSVQELIPDSFVPCVAALCSDEAERLTRLNHLSFAELLKPFSRLTSEVHMRDPNNQLHVIKNLKIAVSNIVTQPPQPGAIRKLLNDVVSGSQPAEGLVANVITAGDYDLNISATTPWFESYRETFLQSMPALDHEFLNHYLACMLVASSSEAEPVEQFSKLSQEQHRIQHNSDYSYPKWFIPNTLKYYVLLHDVSAGDEQRAESIYEEMKQKYGTQGCYLLKINSRTSNRASDEQIPDPWSQYLQKNSIQNQESYEDGPCTITSNKNSDNNLLSLDGLDNEVKDGLPNNFRAHPLQLEQSSDPSNSIDGPDHLRSASSLHETKKGNTGIIHGACLTLTDHDRIRQFIQEFTFRGLLPHIEKTIRQLNDQLISRKGLSRSLFSATKKWFSGSKVPEKSINDLKNTSGLLYPPEAPELQIRKMADLCFLVQHYDLAYSCYHTAKKDFLNDQAMLYAAGALEMAAVSAFLQPGAPRPYPAHYMDTAIQTYRDICKNMVLAERCVLLSAELLKSQSKYSEAAALLIRLTSEDSDLRSALLLEQAAHCFINMKSPMVRKYAFHMILAGHRFSKAGQKKHALRCYCQAMQVYKGKGWSLAEDHINFTIGRQSYTLRQLDNAVSAFRHILINESKQSAAQQGAFLREYLYVYKNVSQLSPDGPLPQLPLPYINSSATRVFFGHDRRPADGEKQAATHVSLDQEYDSESSQQWRELEEQVVSVVNKGVIPSNFHPTQYCLNSYSDNSRFPLAVVEEPITVEVAFRNPLKVLLLLTDLSLLWKFHPKDFSGKDNEEVKQLVTSEPEMIGAEVISEFLINGEESKVARLKLFPHHIGELHILGVVYNLGTIQGSMTVDGIGALPGCHTGKYSLSMSVRGKQDLEIQGPRLNNTKEEKTSVKYGPDRRLDPIITEEMPLLEVFFIHFPTGLLCGEIRKAYVEFVNVSKCPLTGLKVVSKRPEFFTFGGNTAVLTPLSPSASENCSAYKTVVTDATSVCTALISSASSVDFGIGTGSQPEVIPVPLPDTVLLPGASVQLPMWLRGPDEEGVHEINFLFYYESVKKQPKIRHRILRHTAIICTSRSLNVRATVCRSNSLENEEGRGGNMLVFVDVENTNTSEAGVKEFHIVQVSSSSKHWKLQKSVNLSENKDTKLASREKGKFCFKAIRCEKEEAATQSSEKYTFADIIFGNEQIISSASPCADFFYRSLSSELKKPQAHLPVHTEKQSTEDAVRLIQKCSEVDLNIVILWKAYVVEDSKQLILEGQHHVILRTIGKEAFSYPQKQEPPEMELLKFFRPENITVSSRPSVEQLSSLIKTSLHYPESFNHPFHQKSLCLVPVTLLLSNCSKADVDVIVDLRHKTTSPEALEIHGSFTWLGQTQYKLQLKSQEIHSLQLKACFVHTGVYNLGTPRVFAKLSDQVTVFETSQQNSMPALIIISNV.

Phosphoserine occurs at positions 273, 279, and 309. The segment at 301–321 (QLEQSSDPSNSIDGPDHLRSA) is disordered. Residues 302–312 (LEQSSDPSNSI) are compositionally biased toward polar residues.

The protein belongs to the TRS85 family. In terms of assembly, component of the multisubunit TRAPP (transport protein particle) complex, which includes TRAPPC2, TRAPPC2L, TRAPPC3, TRAPPC3L, TRAPPC4, TRAPPC5, TRAPPC8, TRAPPC9, TRAPPC10, TRAPPC11 and TRAPPC12. Interacts with TBC1D14. Interacts (via C-terminus) with TMEM131 (via C-terminus); the interaction is direct and is involved in collagen secretion.

The protein localises to the golgi apparatus. It is found in the cis-Golgi network. Its function is as follows. Plays a role in endoplasmic reticulum to Golgi apparatus trafficking at a very early stage. Maintains together with TBC1D14 the cycling pool of ATG9 required for initiation of autophagy. Involved in collagen secretion. This is Trafficking protein particle complex subunit 8 (TRAPPC8) from Homo sapiens (Human).